Consider the following 414-residue polypeptide: 3-oxo-tetronate kinase (414 aa).

ATP contacts are provided by residues S255, 355 to 358 (GGET), and G398.

The protein belongs to the four-carbon acid sugar kinase family.

The catalysed reaction is 3-dehydro-L-erythronate + ATP = 3-dehydro-4-O-phospho-L-erythronate + ADP + H(+). The enzyme catalyses 3-dehydro-D-erythronate + ATP = 3-dehydro-4-O-phospho-D-erythronate + ADP + H(+). Its function is as follows. Catalyzes the ATP-dependent phosphorylation of 3-oxo-tetronate to 3-oxo-tetronate 4-phosphate. The sequence is that of 3-oxo-tetronate kinase from Actinobacillus succinogenes (strain ATCC 55618 / DSM 22257 / CCUG 43843 / 130Z).